We begin with the raw amino-acid sequence, 751 residues long: Lysine decarboxylase LdcA (751 aa).

The protein belongs to the Orn/Lys/Arg decarboxylase class-I family. In terms of assembly, homodecamer.

The catalysed reaction is L-lysine + H(+) = cadaverine + CO2. Its function is as follows. Plays an essential role in lysine utilization by acting as a lysine decarboxylase. In Pseudomonas aeruginosa (strain ATCC 15692 / DSM 22644 / CIP 104116 / JCM 14847 / LMG 12228 / 1C / PRS 101 / PAO1), this protein is Lysine decarboxylase LdcA.